We begin with the raw amino-acid sequence, 243 residues long: Glycerophosphodiester phosphodiesterase (243 aa).

In terms of domain architecture, GP-PDE spans 3-239; that stretch reads TLVIAHRGDS…DDPETLINLV (237 aa). The active-site Proton acceptor is His8. Ca(2+)-binding residues include Glu35 and Asp37. His50 serves as the catalytic Proton donor. Ca(2+) is bound at residue Glu110.

The protein belongs to the glycerophosphoryl diester phosphodiesterase family. As to quaternary structure, homodimer. Mg(2+) is required as a cofactor. Requires Ca(2+) as cofactor.

The catalysed reaction is a sn-glycero-3-phosphodiester + H2O = an alcohol + sn-glycerol 3-phosphate + H(+). It catalyses the reaction sn-glycerol 3-phosphocholine + H2O = sn-glycerol 3-phosphate + choline + H(+). Inhibited by EDTA. Functionally, glycerophosphodiester phosphodiesterase hydrolyzes glycerophosphodiesters into glycerol-3-phosphate (G3P) and the corresponding alcohol. Can use glycerophosphocholine. This Caldanaerobacter subterraneus subsp. tengcongensis (strain DSM 15242 / JCM 11007 / NBRC 100824 / MB4) (Thermoanaerobacter tengcongensis) protein is Glycerophosphodiester phosphodiesterase.